A 326-amino-acid polypeptide reads, in one-letter code: Glutamine synthetase (326 aa).

The GS beta-grasp domain occupies 4 to 85; the sequence is FKLEYIWLDG…VMCEVMMPDG (82 aa). The region spanning 83–326 is the GS catalytic domain; it reads PDGHAHASNA…GDPYQIVRRF (244 aa). Mg(2+) contacts are provided by Glu-107 and Glu-109. Glu-164 contributes to the ATP binding site. Glu-169 and Glu-176 together coordinate Mg(2+). Position 275 (Glu-275) interacts with L-glutamate.

Belongs to the glutamine synthetase family. Homooctamer and homotetramer. It depends on Mg(2+) as a cofactor.

Its subcellular location is the cytoplasm. The catalysed reaction is L-glutamate + NH4(+) + ATP = L-glutamine + ADP + phosphate + H(+). Transferase activity is inhibited by NH(4)Cl. Its function is as follows. Catalyzes the ATP-dependent biosynthesis of glutamine from glutamate and ammonia. This Rhizobium leguminosarum bv. phaseoli protein is Glutamine synthetase.